A 601-amino-acid polypeptide reads, in one-letter code: Glutathione-regulated potassium-efflux system protein KefB (601 aa).

Helical transmembrane passes span 4 to 24 (ADLL…VPLA), 29 to 49 (IGAV…GLGF), 55 to 75 (EILH…GLEL), 87 to 107 (IFGV…GLLM), 111 to 131 (FLWQ…TAMA), 152 to 172 (VLLF…LLAG), 177 to 197 (HFDW…LIGG), 207 to 227 (FIAA…LVLS), 230 to 250 (LFMD…GVLL), 262 to 282 (AIDP…GMSL), 284 to 304 (LGVL…LVVI), 324 to 344 (MQFA…FSTA), and 356 to 376 (ALLL…MKGI). Positions 400 to 519 (KPQVVVVGFG…AGVTQFSRET (120 aa)) constitute an RCK N-terminal domain.

It belongs to the monovalent cation:proton antiporter 2 (CPA2) transporter (TC 2.A.37) family. KefB subfamily. In terms of assembly, interacts with the regulatory subunit KefG.

It localises to the cell inner membrane. Pore-forming subunit of a potassium efflux system that confers protection against electrophiles. Catalyzes K(+)/H(+) antiport. This chain is Glutathione-regulated potassium-efflux system protein KefB, found in Salmonella typhi.